The primary structure comprises 95 residues: Neutrophil antibiotic peptide NP-5 (95 aa).

A signal peptide spans M1–A19. A propeptide spanning residues E20–G62 is cleaved from the precursor. Disulfide bonds link C65-C93, C67-C82, and C72-C92.

This sequence belongs to the alpha-defensin family.

The protein resides in the secreted. In terms of biological role, microbicidal activity. The sequence is that of Neutrophil antibiotic peptide NP-5 from Oryctolagus cuniculus (Rabbit).